A 198-amino-acid polypeptide reads, in one-letter code: Ribosome maturation factor RimP (198 aa).

This sequence belongs to the RimP family.

The protein localises to the cytoplasm. Functionally, required for maturation of 30S ribosomal subunits. This chain is Ribosome maturation factor RimP, found in Rhizobium etli (strain ATCC 51251 / DSM 11541 / JCM 21823 / NBRC 15573 / CFN 42).